Reading from the N-terminus, the 149-residue chain is UPF0178 protein SE_0451 (149 aa).

The protein belongs to the UPF0178 family.

The polypeptide is UPF0178 protein SE_0451 (Staphylococcus epidermidis (strain ATCC 12228 / FDA PCI 1200)).